The following is a 1174-amino-acid chain: RecBCD enzyme subunit RecB (1174 aa).

The DNA-binding and helicase activity, interacts with RecC stretch occupies residues 1-852 (MKIDSLKEKL…GGKTMNYEGL (852 aa)). Residues 4–449 (DSLKEKLNIF…YYLDTNWRSS (446 aa)) form the UvrD-like helicase ATP-binding domain. 25 to 32 (ASAGTGKT) provides a ligand contact to ATP. A UvrD-like helicase C-terminal domain is found at 479 to 745 (PSSKNLKMNF…KIITIHKSKG (267 aa)). Residues 900-1174 (TWSITSFSQL…LIKKTMTLIS (275 aa)) are nuclease activity, interacts with RecD and RecA. 3 residues coordinate Mg(2+): His957, Asp1068, and Asp1081. Asp1081 acts as the For nuclease activity in catalysis.

Belongs to the helicase family. UvrD subfamily. In terms of assembly, heterotrimer of RecB, RecC and RecD. All subunits contribute to DNA-binding. Interacts with RecA. Mg(2+) is required as a cofactor.

The enzyme catalyses Exonucleolytic cleavage (in the presence of ATP) in either 5'- to 3'- or 3'- to 5'-direction to yield 5'-phosphooligonucleotides.. It catalyses the reaction Couples ATP hydrolysis with the unwinding of duplex DNA by translocating in the 3'-5' direction.. It carries out the reaction ATP + H2O = ADP + phosphate + H(+). A helicase/nuclease that prepares dsDNA breaks (DSB) for recombinational DNA repair. Binds to DSBs and unwinds DNA via a highly rapid and processive ATP-dependent bidirectional helicase activity. Unwinds dsDNA until it encounters a Chi (crossover hotspot instigator) sequence from the 3' direction. Cuts ssDNA a few nucleotides 3' to the Chi site. The properties and activities of the enzyme are changed at Chi. The Chi-altered holoenzyme produces a long 3'-ssDNA overhang and facilitates RecA-binding to the ssDNA for homologous DNA recombination and repair. Holoenzyme degrades any linearized DNA that is unable to undergo homologous recombination. In the holoenzyme this subunit contributes ATPase, 3'-5' helicase, exonuclease activity and loads RecA onto ssDNA. The protein is RecBCD enzyme subunit RecB of Buchnera aphidicola subsp. Acyrthosiphon pisum (strain APS) (Acyrthosiphon pisum symbiotic bacterium).